The primary structure comprises 287 residues: Phosphatidylserine decarboxylase proenzyme (287 aa).

Catalysis depends on charge relay system; for autoendoproteolytic cleavage activity residues D90, H147, and S252. Residue S252 is the Schiff-base intermediate with substrate; via pyruvic acid; for decarboxylase activity of the active site. The residue at position 252 (S252) is a Pyruvic acid (Ser); by autocatalysis.

This sequence belongs to the phosphatidylserine decarboxylase family. PSD-B subfamily. Prokaryotic type I sub-subfamily. In terms of assembly, heterodimer of a large membrane-associated beta subunit and a small pyruvoyl-containing alpha subunit. Pyruvate serves as cofactor. Post-translationally, is synthesized initially as an inactive proenzyme. Formation of the active enzyme involves a self-maturation process in which the active site pyruvoyl group is generated from an internal serine residue via an autocatalytic post-translational modification. Two non-identical subunits are generated from the proenzyme in this reaction, and the pyruvate is formed at the N-terminus of the alpha chain, which is derived from the carboxyl end of the proenzyme. The autoendoproteolytic cleavage occurs by a canonical serine protease mechanism, in which the side chain hydroxyl group of the serine supplies its oxygen atom to form the C-terminus of the beta chain, while the remainder of the serine residue undergoes an oxidative deamination to produce ammonia and the pyruvoyl prosthetic group on the alpha chain. During this reaction, the Ser that is part of the protease active site of the proenzyme becomes the pyruvoyl prosthetic group, which constitutes an essential element of the active site of the mature decarboxylase.

The protein localises to the cell membrane. It carries out the reaction a 1,2-diacyl-sn-glycero-3-phospho-L-serine + H(+) = a 1,2-diacyl-sn-glycero-3-phosphoethanolamine + CO2. It functions in the pathway phospholipid metabolism; phosphatidylethanolamine biosynthesis; phosphatidylethanolamine from CDP-diacylglycerol: step 2/2. In terms of biological role, catalyzes the formation of phosphatidylethanolamine (PtdEtn) from phosphatidylserine (PtdSer). The protein is Phosphatidylserine decarboxylase proenzyme of Pseudomonas putida (strain ATCC 700007 / DSM 6899 / JCM 31910 / BCRC 17059 / LMG 24140 / F1).